We begin with the raw amino-acid sequence, 157 residues long: uncharacterized protein (157 aa).

This is an uncharacterized protein from Magallana gigas (Pacific oyster).